A 160-amino-acid polypeptide reads, in one-letter code: MRRTIMSTEKINFDIHKILTLLPHRYPILLVDRVLELEPHKSIKALKNVTVNEPFFTGHFPKRPVMPGVLIIEALAQAAALLTFAEAEPKDPENTLYYFVGIDNARFKRVVEPGDQLILNVTFERYIRGIWKFKAVAEVDGKVAAEAELMCTVKTADAAP.

His59 is an active-site residue.

The protein belongs to the thioester dehydratase family. FabZ subfamily.

The protein resides in the cytoplasm. The enzyme catalyses a (3R)-hydroxyacyl-[ACP] = a (2E)-enoyl-[ACP] + H2O. Involved in unsaturated fatty acids biosynthesis. Catalyzes the dehydration of short chain beta-hydroxyacyl-ACPs and long chain saturated and unsaturated beta-hydroxyacyl-ACPs. The polypeptide is 3-hydroxyacyl-[acyl-carrier-protein] dehydratase FabZ (Burkholderia thailandensis (strain ATCC 700388 / DSM 13276 / CCUG 48851 / CIP 106301 / E264)).